The primary structure comprises 264 residues: ATP synthase subunit a (264 aa).

6 consecutive transmembrane segments (helical) span residues 27-47, 87-107, 131-151, 172-192, 196-216, and 230-250; these read VHLD…FVFS, VGPL…IDLI, DISG…FYTI, LLIP…PVSL, LFGN…MYMA, and LAWA…FMML.

This sequence belongs to the ATPase A chain family. In terms of assembly, F-type ATPases have 2 components, CF(1) - the catalytic core - and CF(0) - the membrane proton channel. CF(1) has five subunits: alpha(3), beta(3), gamma(1), delta(1), epsilon(1). CF(0) has three main subunits: a(1), b(2) and c(9-12). The alpha and beta chains form an alternating ring which encloses part of the gamma chain. CF(1) is attached to CF(0) by a central stalk formed by the gamma and epsilon chains, while a peripheral stalk is formed by the delta and b chains.

Its subcellular location is the cell inner membrane. Key component of the proton channel; it plays a direct role in the translocation of protons across the membrane. This is ATP synthase subunit a from Pasteurella multocida (strain Pm70).